A 335-amino-acid chain; its full sequence is MEEIKFNQIGVSFKGSGSYVPDQILTNEEISQKVDTSDEWIKSRTGISERRISRVEDNVADMGYKAALTAIEMANWDIKTIDLIVLATSTPHDLFGSAPSIQSKLGASNAVAFDLTAACSGFLFALITTSQFLKAGNFKRALVVGADQLSSFVDWNDRRSCILFGDGAGALAIEATNEFDNFIGFDMRTDGERGCFLNLPSKNNEDSIIDNIEFLSGGFSPIQMNGQEVYKFAVKEVPIILDKLFKKTNYSSDEVDWLILHQANQRILDSVGDRLKIPREKILSNLEKYGNTSAATIPLMIDEAIRNHSIKQNDIIATSGFGAGLSWGAALIKWG.

Residues C119 and H261 contribute to the active site. The tract at residues 262 to 266 is ACP-binding; it reads QANQR. N291 is an active-site residue.

The protein belongs to the thiolase-like superfamily. FabH family. Homodimer.

Its subcellular location is the cytoplasm. The catalysed reaction is malonyl-[ACP] + acetyl-CoA + H(+) = 3-oxobutanoyl-[ACP] + CO2 + CoA. It functions in the pathway lipid metabolism; fatty acid biosynthesis. Functionally, catalyzes the condensation reaction of fatty acid synthesis by the addition to an acyl acceptor of two carbons from malonyl-ACP. Catalyzes the first condensation reaction which initiates fatty acid synthesis and may therefore play a role in governing the total rate of fatty acid production. Possesses both acetoacetyl-ACP synthase and acetyl transacylase activities. Its substrate specificity determines the biosynthesis of branched-chain and/or straight-chain of fatty acids. The sequence is that of Beta-ketoacyl-[acyl-carrier-protein] synthase III from Prochlorococcus marinus (strain MIT 9215).